Here is a 335-residue protein sequence, read N- to C-terminus: Ornithine carbamoyltransferase (335 aa).

Carbamoyl phosphate-binding positions include 57–60 (STRT), arginine 108, and 135–138 (HPTQ). L-ornithine-binding positions include asparagine 168, aspartate 232, and 236-237 (SM). Residues 274–275 (CL) and arginine 319 each bind carbamoyl phosphate.

The protein belongs to the aspartate/ornithine carbamoyltransferase superfamily. OTCase family.

It localises to the cytoplasm. It carries out the reaction carbamoyl phosphate + L-ornithine = L-citrulline + phosphate + H(+). The protein operates within amino-acid degradation; L-arginine degradation via ADI pathway; carbamoyl phosphate from L-arginine: step 2/2. Functionally, reversibly catalyzes the transfer of the carbamoyl group from carbamoyl phosphate (CP) to the N(epsilon) atom of ornithine (ORN) to produce L-citrulline. The sequence is that of Ornithine carbamoyltransferase from Limosilactobacillus reuteri (strain DSM 20016) (Lactobacillus reuteri).